A 524-amino-acid chain; its full sequence is 11-oxo-beta-amyrin 30-oxidase (524 aa).

The chain crosses the membrane as a helical span at residues 9-29; that stretch reads GTTVIISVLSVLLAVIPWYLL. Residue Cys472 participates in heme binding.

The protein belongs to the cytochrome P450 family. It depends on heme as a cofactor. In terms of tissue distribution, expressed in flowers. Detected in roots upon salt treatment.

It localises to the membrane. It catalyses the reaction 11-oxo-beta-amyrin + 3 reduced [NADPH--hemoprotein reductase] + 3 O2 = glycyrrhetinate + 3 oxidized [NADPH--hemoprotein reductase] + 4 H2O + 4 H(+). Functionally, involved in the biosynthesis of triterpenoid saponins. Catalyzes three sequential oxidation steps at C-30 of 11-oxo-beta-amyrin. Also able to catalyze sequential C-30 hydroxylation of beta-amyrin to produce 30-hydroxy-beta-amyrin and 11-deoxoglycyrrhetinic acid. In Medicago truncatula (Barrel medic), this protein is 11-oxo-beta-amyrin 30-oxidase (CYP72A63).